Consider the following 45-residue polypeptide: Large ribosomal subunit protein bL34 (45 aa).

The tract at residues 1-45 (MTKRTFGGTSRKRKRVSGFRVRMRSHTGRRVIRTRRKRGRSRLAA) is disordered. The segment covering 10–45 (SRKRKRVSGFRVRMRSHTGRRVIRTRRKRGRSRLAA) has biased composition (basic residues).

Belongs to the bacterial ribosomal protein bL34 family.

This chain is Large ribosomal subunit protein bL34, found in Synechococcus sp. (strain CC9311).